A 188-amino-acid polypeptide reads, in one-letter code: Adenine phosphoribosyltransferase (188 aa).

This sequence belongs to the purine/pyrimidine phosphoribosyltransferase family. Homodimer.

Its subcellular location is the cytoplasm. The enzyme catalyses AMP + diphosphate = 5-phospho-alpha-D-ribose 1-diphosphate + adenine. It participates in purine metabolism; AMP biosynthesis via salvage pathway; AMP from adenine: step 1/1. Its function is as follows. Catalyzes a salvage reaction resulting in the formation of AMP, that is energically less costly than de novo synthesis. This chain is Adenine phosphoribosyltransferase, found in Neisseria meningitidis serogroup C (strain 053442).